A 77-amino-acid polypeptide reads, in one-letter code: Chassatide C2 (77 aa).

The first 24 residues, 1–24 (MAKFANYLMLFLLVASLVMLEAQS), serve as a signal peptide directing secretion. The propeptide at 25 to 44 (SDTIKVPDLGKRLLMNRDPN) is removed in mature form. Positions 45-75 (GIPCAESCVWIPCTITALMGCSCKNNVCYNN) form a cross-link, cyclopeptide (Gly-Asn). Intrachain disulfides connect C48-C65, C52-C67, and C57-C72. At M63 the chain carries Methionine sulfoxide; in form chassatide chaC2A. The propeptide at 76–77 (EL) is removed in mature form.

It belongs to the cyclotide family. Bracelet subfamily. In terms of processing, this is a cyclic peptide. In terms of tissue distribution, expressed in fruit, pedicel and stem but not in leaf and root (at protein level).

Chassatide C2: Probably participates in a plant defense mechanism. Has no activity against bacteria up to a concentration of 80 uM. Has cytotoxic but no hemolytic activity. In terms of biological role, chassatide C2A: Probably participates in a plant defense mechanism. Has no activity against bacteria up to a concentration of 80 uM. Has no cytotoxic and no hemolytic activity. The polypeptide is Chassatide C2 (Chassalia chartacea (Chassalia curviflora)).